A 625-amino-acid polypeptide reads, in one-letter code: Inactive glucose-6-phosphate 1-dehydrogenase 4, chloroplastic (625 aa).

Residues 1–49 constitute a chloroplast transit peptide; sequence MSLSSCLLPFSQSATAPSSSVCSCHLAASFSNFPVSSRDYSFSRSGSLV. NADP(+) contacts are provided by residues 160-167 and arginine 194; that span reads GATGELAR. An intrachain disulfide couples cysteine 212 to cysteine 220. Lysine 297 is an NADP(+) binding site. Residues lysine 297, 327 to 331, glutamate 365, and aspartate 382 each bind D-glucose 6-phosphate; that span reads HMLGR. Residue histidine 387 is the Proton acceptor of the active site. The NADP(+) site is built by arginine 471, arginine 480, arginine 513, and arginine 606.

This sequence belongs to the glucose-6-phosphate dehydrogenase family. In terms of assembly, forms homodimer. Interacts with G6PD1. As to expression, expressed in leaves, stems and buds.

Its subcellular location is the plastid. The protein localises to the chloroplast stroma. Functionally, seems to be a catalytically inactive enzyme. The polypeptide is Inactive glucose-6-phosphate 1-dehydrogenase 4, chloroplastic (Arabidopsis thaliana (Mouse-ear cress)).